The sequence spans 136 residues: Small ribosomal subunit protein uS8c (136 aa).

It belongs to the universal ribosomal protein uS8 family. As to quaternary structure, part of the 30S ribosomal subunit.

It localises to the plastid. Its subcellular location is the chloroplast. In terms of biological role, one of the primary rRNA binding proteins, it binds directly to 16S rRNA central domain where it helps coordinate assembly of the platform of the 30S subunit. In Agrostis stolonifera (Creeping bentgrass), this protein is Small ribosomal subunit protein uS8c (rps8).